Consider the following 432-residue polypeptide: Phosphoprotein associated with glycosphingolipid-enriched microdomains 1 (432 aa).

Residues 1-16 (MGPAGSLLGSGQMQIT) lie on the Extracellular side of the membrane. The chain crosses the membrane as a helical; Signal-anchor for type III membrane protein span at residues 17–37 (LWGSLAAVAIFFVITFLIFLC). S-palmitoyl cysteine attachment occurs at residues cysteine 37 and cysteine 40. At 38–432 (SSCDREKKPR…LQQGRDITRL (395 aa)) the chain is on the cytoplasmic side. A phosphoserine mark is found at serine 50 and serine 61. Tyrosine 105 is modified (phosphotyrosine; by LYN). Positions 110-122 (TSASDLLDSQDST) are enriched in polar residues. The interval 110–137 (TSASDLLDSQDSTGKPKCHQSRELPRIP) is disordered. Residues tyrosine 163, tyrosine 181, and tyrosine 227 each carry the phosphotyrosine modification. 2 disordered regions span residues 197–230 (EKGH…YASV) and 244–432 (SILG…ITRL). Basic and acidic residues predominate over residues 220 to 230 (GKAEFAEYASV). Serine 229 is subject to Phosphoserine. The span at 316–356 (MYSSVNKPGQLVNKSGQSLTVPESTYTSIQGDPQRSPSSCN) shows a compositional bias: polar residues. Tyrosine 317 is subject to Phosphotyrosine; by FYN and LYN. Positions 317 to 320 (YSSV) are interaction with CSK. Serine 354 is subject to Phosphoserine. Tyrosine 359 bears the Phosphotyrosine mark. Serine 380 carries the post-translational modification Phosphoserine. 2 positions are modified to phosphotyrosine: tyrosine 387 and tyrosine 417. The segment at 430–432 (TRL) is interaction with NHERF1.

Interacts with FYN. When phosphorylated, interacts with CSK. Interacts with NHERF1/EBP50. In resting T-cells, part of a PAG1-NHERF1-MSN complex which is disrupted upon TCR activation. Interacts with LYN on plasma membrane lipid rafts. Identified in a complex with LYN and STAT3. In terms of processing, palmitoylated. Phosphorylated by FYN on Tyr-317 in resting T-cells; which promotes interaction with CSK. Dephosphorylated by PTPRC/CD45 upon TCR activation; which leads to CSK dissociation. May also be dephosphorylated by PTPN11. Hyperphosphorylated in mast cells upon FCER1 activation. Phosphorylated by LYN. In terms of tissue distribution, ubiquitously expressed. Present in germinal center B-cells, plasma cells, T-cells, monocytes and platelets (at protein level).

It localises to the cell membrane. Functionally, negatively regulates TCR (T-cell antigen receptor)-mediated signaling in T-cells and FCER1 (high affinity immunoglobulin epsilon receptor)-mediated signaling in mast cells. Promotes CSK activation and recruitment to lipid rafts, which results in LCK inhibition. Inhibits immunological synapse formation by preventing dynamic arrangement of lipid raft proteins. May be involved in cell adhesion signaling. In Homo sapiens (Human), this protein is Phosphoprotein associated with glycosphingolipid-enriched microdomains 1 (PAG1).